Here is a 197-residue protein sequence, read N- to C-terminus: Imidazoleglycerol-phosphate dehydratase (197 aa).

It belongs to the imidazoleglycerol-phosphate dehydratase family.

The protein localises to the cytoplasm. The enzyme catalyses D-erythro-1-(imidazol-4-yl)glycerol 3-phosphate = 3-(imidazol-4-yl)-2-oxopropyl phosphate + H2O. The protein operates within amino-acid biosynthesis; L-histidine biosynthesis; L-histidine from 5-phospho-alpha-D-ribose 1-diphosphate: step 6/9. This chain is Imidazoleglycerol-phosphate dehydratase, found in Rhodopseudomonas palustris (strain ATCC BAA-98 / CGA009).